Reading from the N-terminus, the 160-residue chain is Protein Vago (160 aa).

The N-terminal stretch at 1–23 is a signal peptide; the sequence is MESISSMIYLVAMMSLIIGGSQA.

In terms of tissue distribution, expressed in fat body.

The protein resides in the secreted. Functionally, probably involved in the antiviral immune response. May have a role in controlling viral load in the adult fat body, after infection with viruses such as the Drosophila C virus. This Drosophila melanogaster (Fruit fly) protein is Protein Vago.